The chain runs to 332 residues: Glycerol-3-phosphate dehydrogenase [NAD(P)+] (332 aa).

Residues Trp-13, Lys-34, and Lys-108 each coordinate NADPH. 3 residues coordinate sn-glycerol 3-phosphate: Lys-108, Gly-136, and Ser-138. Ala-140 is a binding site for NADPH. Lys-191, Asp-244, Ser-254, Arg-255, and Asn-256 together coordinate sn-glycerol 3-phosphate. The active-site Proton acceptor is Lys-191. An NADPH-binding site is contributed by Arg-255. 2 residues coordinate NADPH: Val-279 and Glu-281.

It belongs to the NAD-dependent glycerol-3-phosphate dehydrogenase family.

It is found in the cytoplasm. The enzyme catalyses sn-glycerol 3-phosphate + NAD(+) = dihydroxyacetone phosphate + NADH + H(+). It carries out the reaction sn-glycerol 3-phosphate + NADP(+) = dihydroxyacetone phosphate + NADPH + H(+). Its pathway is membrane lipid metabolism; glycerophospholipid metabolism. Its function is as follows. Catalyzes the reduction of the glycolytic intermediate dihydroxyacetone phosphate (DHAP) to sn-glycerol 3-phosphate (G3P), the key precursor for phospholipid synthesis. In Francisella philomiragia subsp. philomiragia (strain ATCC 25017 / CCUG 19701 / FSC 153 / O#319-036), this protein is Glycerol-3-phosphate dehydrogenase [NAD(P)+].